Reading from the N-terminus, the 93-residue chain is YcgL domain-containing protein PSHAb0508 (93 aa).

A YcgL domain is found at 1–85 (MLTAVYKSKK…PQENLLSQLR (85 aa)).

The polypeptide is YcgL domain-containing protein PSHAb0508 (Pseudoalteromonas translucida (strain TAC 125)).